The primary structure comprises 704 residues: Polyribonucleotide nucleotidyltransferase (704 aa).

Positions 487 and 493 each coordinate Mg(2+). Residues 554-613 enclose the KH domain; it reads PRLLTIKIHPDKIREVIGKGGSTIQAITKETGTQIDIQDDGTIIIASVNAIAAQAAKSRI. The region spanning 623-691 is the S1 motif domain; it reads GRIYEGKVAK…KQGRIRLSIK (69 aa).

The protein belongs to the polyribonucleotide nucleotidyltransferase family. As to quaternary structure, component of the RNA degradosome, which is a multiprotein complex involved in RNA processing and mRNA degradation. Mg(2+) is required as a cofactor.

It is found in the cytoplasm. It catalyses the reaction RNA(n+1) + phosphate = RNA(n) + a ribonucleoside 5'-diphosphate. In terms of biological role, involved in mRNA degradation. Catalyzes the phosphorolysis of single-stranded polyribonucleotides processively in the 3'- to 5'-direction. This chain is Polyribonucleotide nucleotidyltransferase, found in Xanthomonas campestris pv. campestris (strain B100).